Consider the following 24-residue polypeptide: Brevinin-1 (24 aa).

A disulfide bridge links cysteine 18 with cysteine 24.

This sequence belongs to the frog skin active peptide (FSAP) family. Brevinin subfamily. As to expression, expressed by the skin glands.

It localises to the secreted. Its function is as follows. Shows antibacterial activity against representative Gram-negative and Gram-positive bacterial species, and a very high hemolytic activity. This is Brevinin-1 from Pelophylax porosus brevipodus (Nagoya Daruma pond frog).